A 305-amino-acid chain; its full sequence is uncharacterized protein (305 aa).

A run of 10 helical transmembrane segments spans residues L11 to L31, L37 to P57, I70 to L90, L97 to L117, V126 to G146, I148 to V168, I180 to W200, L217 to G237, V244 to H264, and E265 to V285. EamA domains follow at residues I18–A141 and V161–T287.

The protein belongs to the EamA transporter family.

Its subcellular location is the cell membrane. This is an uncharacterized protein from Bacillus subtilis (strain 168).